We begin with the raw amino-acid sequence, 373 residues long: UDP-3-O-acylglucosamine N-acyltransferase 2 (373 aa).

His239 serves as the catalytic Proton acceptor. A disordered region spans residues 345–373; that stretch reads KTNGKSGQADAPPKVALECHGTTGDAPQG.

It belongs to the transferase hexapeptide repeat family. LpxD subfamily. In terms of assembly, homotrimer.

It carries out the reaction a UDP-3-O-[(3R)-3-hydroxyacyl]-alpha-D-glucosamine + a (3R)-hydroxyacyl-[ACP] = a UDP-2-N,3-O-bis[(3R)-3-hydroxyacyl]-alpha-D-glucosamine + holo-[ACP] + H(+). Its pathway is bacterial outer membrane biogenesis; LPS lipid A biosynthesis. Functionally, catalyzes the N-acylation of UDP-3-O-acylglucosamine using 3-hydroxyacyl-ACP as the acyl donor. Is involved in the biosynthesis of lipid A, a phosphorylated glycolipid that anchors the lipopolysaccharide to the outer membrane of the cell. In Gloeobacter violaceus (strain ATCC 29082 / PCC 7421), this protein is UDP-3-O-acylglucosamine N-acyltransferase 2.